Consider the following 63-residue polypeptide: Large ribosomal subunit protein uL30 (63 aa).

The protein belongs to the universal ribosomal protein uL30 family. Part of the 50S ribosomal subunit.

This chain is Large ribosomal subunit protein uL30, found in Chlorobium chlorochromatii (strain CaD3).